The primary structure comprises 117 residues: Anti-sigma F factor antagonist (117 aa).

The STAS domain occupies 2–115 (HFQLEMVTRE…QAIDRVRGIV (114 aa)). Serine 58 carries the post-translational modification Phosphoserine.

It belongs to the anti-sigma-factor antagonist family. Post-translationally, phosphorylated by SpoIIAB on a serine residue.

In the phosphorylated form it could act as an anti-anti-sigma factor that counteracts SpoIIAB and thus releases sigma f from inhibition. This is Anti-sigma F factor antagonist (spoIIAA) from Lysinibacillus sphaericus (Bacillus sphaericus).